The chain runs to 486 residues: Malonate-semialdehyde dehydrogenase (486 aa).

Phe-154, Lys-178, Glu-181, Arg-182, and Ser-231 together coordinate NAD(+). The Nucleophile role is filled by Cys-286. Glu-386 serves as a coordination point for NAD(+).

This sequence belongs to the aldehyde dehydrogenase family. IolA subfamily. In terms of assembly, homotetramer.

The enzyme catalyses 3-oxopropanoate + NAD(+) + CoA + H2O = hydrogencarbonate + acetyl-CoA + NADH + H(+). The catalysed reaction is 2-methyl-3-oxopropanoate + NAD(+) + CoA + H2O = propanoyl-CoA + hydrogencarbonate + NADH + H(+). Its pathway is polyol metabolism; myo-inositol degradation into acetyl-CoA; acetyl-CoA from myo-inositol: step 7/7. In terms of biological role, catalyzes the oxidation of malonate semialdehyde (MSA) and methylmalonate semialdehyde (MMSA) into acetyl-CoA and propanoyl-CoA, respectively. Is involved in a myo-inositol catabolic pathway. Bicarbonate, and not CO2, is the end-product of the enzymatic reaction. This is Malonate-semialdehyde dehydrogenase from Bacillus cereus (strain ATCC 14579 / DSM 31 / CCUG 7414 / JCM 2152 / NBRC 15305 / NCIMB 9373 / NCTC 2599 / NRRL B-3711).